Here is a 194-residue protein sequence, read N- to C-terminus: dCTP deaminase, dUMP-forming (194 aa).

Residues 104-109 (RSSLGR), Asp-122, 130-132 (TLE), Gln-151, Tyr-165, Lys-172, and Gln-176 contribute to the dCTP site. Catalysis depends on Glu-132, which acts as the Proton donor/acceptor.

This sequence belongs to the dCTP deaminase family. As to quaternary structure, homotrimer.

It carries out the reaction dCTP + 2 H2O = dUMP + NH4(+) + diphosphate. Its pathway is pyrimidine metabolism; dUMP biosynthesis; dUMP from dCTP: step 1/1. Its function is as follows. Bifunctional enzyme that catalyzes both the deamination of dCTP to dUTP and the hydrolysis of dUTP to dUMP without releasing the toxic dUTP intermediate. In Dictyoglomus thermophilum (strain ATCC 35947 / DSM 3960 / H-6-12), this protein is dCTP deaminase, dUMP-forming.